A 62-amino-acid polypeptide reads, in one-letter code: DKPTTKPICEQAFGNSGPCFAYIKLYSYNQKTKKCEEFIYGGCQGNDNRFITLAECEQKCIK.

A BPTI/Kunitz inhibitor domain is found at 9 to 60 (CEQAFGNSGPCFAYIKLYSYNQKTKKCEEFIYGGCQGNDNRFITLAECEQKC). Cystine bridges form between cysteine 9–cysteine 60, cysteine 19–cysteine 43, and cysteine 35–cysteine 56.

In terms of biological role, inhibits chymotrypsin and thus avoids the accidental chymotrypsin-mediated activation of prophenoloxidase. This enzyme is required by the insect immune system to produce melanin which is used to engulf foreign objects. In Bombyx mori (Silk moth), this protein is Chymotrypsin inhibitor SCI-I.